Reading from the N-terminus, the 641-residue chain is Bifunctional protein glk (641 aa).

Residues 1-340 (MSTGAQTKAA…QLSNRTGGAS (340 aa)) form a glucokinase region. 23–28 (ADVGGT) serves as a coordination point for ATP. An HTH rpiR-type domain is found at 341 to 417 (SAVFERIRQM…LKLATGLTGT (77 aa)). Residues 341-641 (SAVFERIRQM…SHGAAPAAKD (301 aa)) form a putative HTH-type transcriptional regulator region. Residues 377–396 (IVNIARKADVSQPTVIRFCR) constitute a DNA-binding region (H-T-H motif). One can recognise an SIS domain in the interval 461–600 (AIDILNNARR…AVGVAIRRAA (140 aa)). Residues 576–596 (SMISRILHLVMIDILAVGVAI) form a helical membrane-spanning segment.

The protein in the N-terminal section; belongs to the bacterial glucokinase family.

The protein resides in the membrane. It catalyses the reaction D-glucose + ATP = D-glucose 6-phosphate + ADP + H(+). The polypeptide is Bifunctional protein glk (glk) (Burkholderia mallei (strain ATCC 23344)).